The primary structure comprises 317 residues: Carbonic anhydrase 5B, mitochondrial (317 aa).

Residues 1-33 constitute a mitochondrion transit peptide; that stretch reads MVVMNSLRVILQASPGKLLWRKFQIPRFMPARP. Residues 37–296 form the Alpha-carbonic anhydrase domain; that stretch reads YTCTYKTRNR…LMNRTVRSSF (260 aa). Residues H130, H132, and H155 each coordinate Zn(2+). 235-236 is a binding site for substrate; the sequence is TT.

The protein belongs to the alpha-carbonic anhydrase family. The cofactor is Zn(2+). Strongest expression in heart, pancreas, kidney, placenta, lung, and skeletal muscle. Not expressed in liver.

It is found in the mitochondrion. The enzyme catalyses hydrogencarbonate + H(+) = CO2 + H2O. With respect to regulation, inhibited by coumarins, sulfonamide derivatives such as acetazolamide (AZA), saccharin and Foscarnet (phosphonoformate trisodium salt). In terms of biological role, mitochondrial carbonic anhydrase that catalyzes the reversible conversion of carbon dioxide to bicarbonate/HCO3. The protein is Carbonic anhydrase 5B, mitochondrial (CA5B) of Homo sapiens (Human).